The sequence spans 329 residues: Glycerol-3-phosphate dehydrogenase [NAD(P)+] (329 aa).

2 residues coordinate NADPH: Trp11 and Lys101. Sn-glycerol 3-phosphate-binding residues include Lys101, Gly132, and Ser134. Ala136 contributes to the NADPH binding site. Positions 188, 241, 251, 252, and 253 each coordinate sn-glycerol 3-phosphate. Catalysis depends on Lys188, which acts as the Proton acceptor. Arg252 is an NADPH binding site. The NADPH site is built by Val276 and Glu278.

This sequence belongs to the NAD-dependent glycerol-3-phosphate dehydrogenase family.

The protein resides in the cytoplasm. The catalysed reaction is sn-glycerol 3-phosphate + NAD(+) = dihydroxyacetone phosphate + NADH + H(+). It catalyses the reaction sn-glycerol 3-phosphate + NADP(+) = dihydroxyacetone phosphate + NADPH + H(+). It participates in membrane lipid metabolism; glycerophospholipid metabolism. In terms of biological role, catalyzes the reduction of the glycolytic intermediate dihydroxyacetone phosphate (DHAP) to sn-glycerol 3-phosphate (G3P), the key precursor for phospholipid synthesis. The polypeptide is Glycerol-3-phosphate dehydrogenase [NAD(P)+] (Phytoplasma australiense).